We begin with the raw amino-acid sequence, 893 residues long: Phosphatidate phosphatase LPIN2 (893 aa).

Residues Met1 to Ile108 form an N-LIP region. Ser106 is modified (phosphoserine). The tract at residues Leu122 to His216 is disordered. Over residues Val123–Ser151 the composition is skewed to polar residues. Over residues Val152 to Cys162 the composition is skewed to basic residues. The short motif at Lys153 to Arg158 is the Nuclear localization signal element. 3 positions are modified to phosphoserine: Ser174, Ser186, and Ser187. A compositionally biased stretch (basic and acidic residues) spans Leu204 to Ser213. Residues Ser243 and Ser303 each carry the phosphoserine modification. 2 disordered regions span residues Leu357 to Ile400 and Phe417 to Leu456. Low complexity predominate over residues Ala360–Pro371. The span at Lys384–Gln393 shows a compositional bias: basic residues. Residues Asp423–Gly445 are compositionally biased toward polar residues. The residue at position 563 (Ser563) is a Phosphoserine. Positions Leu568 to Glu611 are disordered. A compositionally biased stretch (acidic residues) spans Thr601–Glu611. Residues Tyr632 to Glu834 are C-LIP. A DXDXT motif motif is present at residues Asp686–Thr690. Positions Leu697–Leu701 match the LXXIL motif motif.

This sequence belongs to the lipin family. Requires Mg(2+) as cofactor. Expressed at high level in liver and to some extend in lung, kidney, placenta, spleen, thymus, lymph node, prostate, testes, small intestine, and colon. Expressed also in circulating red blood cells and site of lymphopoiesis.

The protein localises to the nucleus. Its subcellular location is the cytoplasm. The protein resides in the cytosol. It is found in the endoplasmic reticulum membrane. The enzyme catalyses a 1,2-diacyl-sn-glycero-3-phosphate + H2O = a 1,2-diacyl-sn-glycerol + phosphate. Its activity is regulated as follows. Inhibited by N-ethylmaleimide. Functionally, acts as a magnesium-dependent phosphatidate phosphatase enzyme which catalyzes the conversion of phosphatidic acid to diacylglycerol during triglyceride, phosphatidylcholine and phosphatidylethanolamine biosynthesis in the endoplasmic reticulum membrane. Plays important roles in controlling the metabolism of fatty acids at different levels. Also acts as a nuclear transcriptional coactivator for PPARGC1A to modulate lipid metabolism. This is Phosphatidate phosphatase LPIN2 from Mus musculus (Mouse).